The following is a 433-amino-acid chain: Histidinol dehydrogenase homolog (433 aa).

The Zn(2+) site is built by glutamine 249 and histidine 252. Residues glutamate 319 and histidine 320 each act as proton acceptor in the active site. The Zn(2+) site is built by aspartate 353 and histidine 412.

The protein belongs to the histidinol dehydrogenase family. Zn(2+) is required as a cofactor.

This Ruegeria pomeroyi (strain ATCC 700808 / DSM 15171 / DSS-3) (Silicibacter pomeroyi) protein is Histidinol dehydrogenase homolog.